A 224-amino-acid polypeptide reads, in one-letter code: Orotate phosphoribosyltransferase (224 aa).

Residues K26, 73–74, R100, K101, K104, H106, and 127–135 contribute to the 5-phospho-alpha-D-ribose 1-diphosphate site; these read YK and EDVTTSGKS. Positions 131 and 160 each coordinate orotate.

Belongs to the purine/pyrimidine phosphoribosyltransferase family. PyrE subfamily. In terms of assembly, homodimer. It depends on Mg(2+) as a cofactor.

The catalysed reaction is orotidine 5'-phosphate + diphosphate = orotate + 5-phospho-alpha-D-ribose 1-diphosphate. It functions in the pathway pyrimidine metabolism; UMP biosynthesis via de novo pathway; UMP from orotate: step 1/2. Its function is as follows. Catalyzes the transfer of a ribosyl phosphate group from 5-phosphoribose 1-diphosphate to orotate, leading to the formation of orotidine monophosphate (OMP). The protein is Orotate phosphoribosyltransferase of Clostridium botulinum (strain Alaska E43 / Type E3).